The following is a 633-amino-acid chain: Probable potassium transport system protein Kup 3 (633 aa).

Transmembrane regions (helical) follow at residues 24–44 (LVLAALGVVYGDIGTSPLYAF), 61–81 (VLGILSLIVWALTIVVTLKYV), 114–134 (LVLGVIGASLFLGDAIITPAI), 148–168 (PALSNWVVPITLTIIAVLFFV), 180–200 (FGPVTALWFIVLGVSGAIHIF), 222–242 (IGSAIAVLGAVFLAVTGAEAL), 258–278 (WFSLVFPSLLLNYFGQGAFVL), 298–318 (IPMVCLATAATVIASQAVISG), 348–368 (IFMPQVNNLLFIFVAALVLFF), 377–397 (AYGIAVTGEMFITSILLFIVM), 405–425 (LTAALAVIVPITLIDAGFLAA), and 427–447 (IAKFAEGGWVPVAVASTMALI).

The protein belongs to the HAK/KUP transporter (TC 2.A.72) family.

Its subcellular location is the cell inner membrane. The enzyme catalyses K(+)(in) + H(+)(in) = K(+)(out) + H(+)(out). Its function is as follows. Transport of potassium into the cell. Likely operates as a K(+):H(+) symporter. The protein is Probable potassium transport system protein Kup 3 of Rhizobium johnstonii (strain DSM 114642 / LMG 32736 / 3841) (Rhizobium leguminosarum bv. viciae).